A 185-amino-acid chain; its full sequence is Segregation and condensation protein B (185 aa).

It belongs to the ScpB family. As to quaternary structure, homodimer. Homodimerization may be required to stabilize the binding of ScpA to the Smc head domains. Component of a cohesin-like complex composed of ScpA, ScpB and the Smc homodimer, in which ScpA and ScpB bind to the head domain of Smc. The presence of the three proteins is required for the association of the complex with DNA.

It is found in the cytoplasm. Functionally, participates in chromosomal partition during cell division. May act via the formation of a condensin-like complex containing Smc and ScpA that pull DNA away from mid-cell into both cell halves. This is Segregation and condensation protein B from Carboxydothermus hydrogenoformans (strain ATCC BAA-161 / DSM 6008 / Z-2901).